We begin with the raw amino-acid sequence, 459 residues long: Serine protease HTRA3 (459 aa).

An N-terminal signal peptide occupies residues 1–23 (MQARALLPATLAILATLAVLALA). The IGFBP N-terminal domain occupies 27-90 (PAAPCPARCD…ECVRGVCRCR (64 aa)). 8 disulfides stabilise this stretch: cysteine 31–cysteine 54, cysteine 35–cysteine 56, cysteine 40–cysteine 57, cysteine 45–cysteine 60, cysteine 68–cysteine 82, cysteine 76–cysteine 87, cysteine 89–cysteine 107, and cysteine 96–cysteine 132. One can recognise a Kazal-like domain in the interval 76-134 (CGDSLECVRGVCRCRWTHTVCGTDGHTYADVCALQAASRRALQVSGTPVRQLQKGACPS). The interval 181–347 (GSGFIMSEAG…IPSDRITRFL (167 aa)) is serine protease. Active-site charge relay system residues include histidine 197, aspartate 233, and serine 311. Residues 365-450 (IRMRTITPSL…EVRRGNDDLL (86 aa)) form the PDZ domain.

It belongs to the peptidase S1C family. In terms of assembly, homotrimer. Interacts with MYH9. Interacts with TGFB1; the interaction inhibits TGFB-mediated signaling. Interacts with BMP4; the interaction inhibits BMP4-mediated signaling. Interacts with TGFB2 and GDF5. In terms of tissue distribution, highest level of isoform 1 in maternal part of the placenta, moderate level in heart, testis and ovary, low level in muscle and lung. High expression found in granulosa cells of the ovary. Expressed in bone matrix, particularly in articular chondrocytes. Very low level of isoform 2 expressed in placenta. Expressed in the bone matrix, particularly in articular chondrocytes.

It localises to the secreted. In terms of biological role, serine protease that cleaves beta-casein/CSN2 as well as several extracellular matrix (ECM) proteoglycans such as decorin/DCN, biglycan/BGN and fibronectin/FN1. Inhibits signaling mediated by TGF-beta family proteins possibly indirectly by degradation of these ECM proteoglycans. May act as a tumor suppressor. Negatively regulates, in vitro, trophoblast invasion during placental development and may be involved in the development of the placenta in vivo. May also have a role in ovarian development, granulosa cell differentiation and luteinization. This is Serine protease HTRA3 (Htra3) from Mus musculus (Mouse).